Consider the following 221-residue polypeptide: Probable septum site-determining protein MinC (221 aa).

This sequence belongs to the MinC family. In terms of assembly, interacts with MinD and FtsZ.

Cell division inhibitor that blocks the formation of polar Z ring septums. Rapidly oscillates between the poles of the cell to destabilize FtsZ filaments that have formed before they mature into polar Z rings. Prevents FtsZ polymerization. The sequence is that of Probable septum site-determining protein MinC from Shewanella oneidensis (strain ATCC 700550 / JCM 31522 / CIP 106686 / LMG 19005 / NCIMB 14063 / MR-1).